Here is a 211-residue protein sequence, read N- to C-terminus: Thiamine-phosphate synthase (211 aa).

Residues 44 to 48 (QYRNK) and Asn75 each bind 4-amino-2-methyl-5-(diphosphooxymethyl)pyrimidine. The Mg(2+) site is built by Asp76 and Asp95. Ser114 is a 4-amino-2-methyl-5-(diphosphooxymethyl)pyrimidine binding site. Position 140–142 (140–142 (TKS)) interacts with 2-[(2R,5Z)-2-carboxy-4-methylthiazol-5(2H)-ylidene]ethyl phosphate. Lys143 contributes to the 4-amino-2-methyl-5-(diphosphooxymethyl)pyrimidine binding site. Position 171 (Gly171) interacts with 2-[(2R,5Z)-2-carboxy-4-methylthiazol-5(2H)-ylidene]ethyl phosphate.

This sequence belongs to the thiamine-phosphate synthase family. Mg(2+) serves as cofactor.

It catalyses the reaction 2-[(2R,5Z)-2-carboxy-4-methylthiazol-5(2H)-ylidene]ethyl phosphate + 4-amino-2-methyl-5-(diphosphooxymethyl)pyrimidine + 2 H(+) = thiamine phosphate + CO2 + diphosphate. The enzyme catalyses 2-(2-carboxy-4-methylthiazol-5-yl)ethyl phosphate + 4-amino-2-methyl-5-(diphosphooxymethyl)pyrimidine + 2 H(+) = thiamine phosphate + CO2 + diphosphate. It carries out the reaction 4-methyl-5-(2-phosphooxyethyl)-thiazole + 4-amino-2-methyl-5-(diphosphooxymethyl)pyrimidine + H(+) = thiamine phosphate + diphosphate. The protein operates within cofactor biosynthesis; thiamine diphosphate biosynthesis; thiamine phosphate from 4-amino-2-methyl-5-diphosphomethylpyrimidine and 4-methyl-5-(2-phosphoethyl)-thiazole: step 1/1. Functionally, condenses 4-methyl-5-(beta-hydroxyethyl)thiazole monophosphate (THZ-P) and 2-methyl-4-amino-5-hydroxymethyl pyrimidine pyrophosphate (HMP-PP) to form thiamine monophosphate (TMP). The protein is Thiamine-phosphate synthase of Koribacter versatilis (strain Ellin345).